Reading from the N-terminus, the 627-residue chain is Chaperone protein DnaK (627 aa).

T197 is modified (phosphothreonine; by autocatalysis). Low complexity predominate over residues 596 to 615 (MYAQGGDQGQQAAPQQEQSG). Residues 596–627 (MYAQGGDQGQQAAPQQEQSGDNVEDVEFEEVK) form a disordered region. Over residues 617 to 627 (NVEDVEFEEVK) the composition is skewed to acidic residues.

It belongs to the heat shock protein 70 family.

Its function is as follows. Acts as a chaperone. The chain is Chaperone protein DnaK from Flavobacterium johnsoniae (strain ATCC 17061 / DSM 2064 / JCM 8514 / BCRC 14874 / CCUG 350202 / NBRC 14942 / NCIMB 11054 / UW101) (Cytophaga johnsonae).